A 357-amino-acid chain; its full sequence is Phosphoribosylformylglycinamidine cyclo-ligase (357 aa).

Belongs to the AIR synthase family.

It localises to the cytoplasm. The enzyme catalyses 2-formamido-N(1)-(5-O-phospho-beta-D-ribosyl)acetamidine + ATP = 5-amino-1-(5-phospho-beta-D-ribosyl)imidazole + ADP + phosphate + H(+). It participates in purine metabolism; IMP biosynthesis via de novo pathway; 5-amino-1-(5-phospho-D-ribosyl)imidazole from N(2)-formyl-N(1)-(5-phospho-D-ribosyl)glycinamide: step 2/2. This is Phosphoribosylformylglycinamidine cyclo-ligase from Rhizobium etli (strain ATCC 51251 / DSM 11541 / JCM 21823 / NBRC 15573 / CFN 42).